Consider the following 144-residue polypeptide: Large ribosomal subunit protein uL15 (144 aa).

A disordered region spans residues 24–52 (GSGLGKTAGRGHKGLKSRSGGSVRPGFEG).

Belongs to the universal ribosomal protein uL15 family. As to quaternary structure, part of the 50S ribosomal subunit.

Functionally, binds to the 23S rRNA. The chain is Large ribosomal subunit protein uL15 from Cellvibrio japonicus (strain Ueda107) (Pseudomonas fluorescens subsp. cellulosa).